A 139-amino-acid polypeptide reads, in one-letter code: Large ribosomal subunit protein uL16 (139 aa).

It belongs to the universal ribosomal protein uL16 family. Part of the 50S ribosomal subunit.

Its function is as follows. Binds 23S rRNA and is also seen to make contacts with the A and possibly P site tRNAs. The protein is Large ribosomal subunit protein uL16 of Prosthecochloris aestuarii (strain DSM 271 / SK 413).